We begin with the raw amino-acid sequence, 626 residues long: DNA (cytosine-5)-methyltransferase DRM2 (626 aa).

2 UBA domains span residues Gly-59–Tyr-101 and Ser-109–Cys-150. Over residues Val-160 to Lys-187 the composition is skewed to acidic residues. Disordered stretches follow at residues Val-160 to Ser-196 and Thr-245 to Met-282. One can recognise a UBA 3 domain in the interval Asn-190 to Cys-232. Positions Glu-262–Ile-276 are enriched in basic and acidic residues. An SAM-dependent MTase DRM-type domain is found at Thr-295 to Ser-626.

Belongs to the class I-like SAM-binding methyltransferase superfamily. DRM-methyltransferase family. In terms of assembly, interacts with RDM1. As to expression, expressed in roots, inflorescences and at lower levels in leaves.

Its subcellular location is the nucleus. It is found in the nucleoplasm. The enzyme catalyses a 2'-deoxycytidine in DNA + S-adenosyl-L-methionine = a 5-methyl-2'-deoxycytidine in DNA + S-adenosyl-L-homocysteine + H(+). Functionally, involved in de novo DNA methylation. Controls asymmetric and CpNpG methylation. Required for FWA gene silencing but not for the maintenance of SUP gene silencing. Functionally redundant to CMT3 to maintain non-CpG methylation. Involved in RNA-directed DNA methylation (RdDM). Acts as major DNA methyltransferase in the RdDM pathway, and is essential for RNA-directed de novo DNA methylation of cytosines in all sequence contexts. Associates with long non-coding RNA (lncRNA) produced by RNA polymerase V (Pol V). This association is dependent on AGO4 and IDN2, and results in DNA methylation of RdDM target loci. This is DNA (cytosine-5)-methyltransferase DRM2 (DRM2) from Arabidopsis thaliana (Mouse-ear cress).